A 352-amino-acid polypeptide reads, in one-letter code: MASFGYFLFLCGLSQALSSYPIWWSLAIGHQYSSLGTQPILCGSIPGLVPKQLRFCRNYVEIMPSVAEGVKIGIQECQHQFRGRRWNCTTVNDSLAIFGPVLDKATRESAFVHAIASAGVAFAVTRSCAEGSATICGCDTRHKGSPGEGWKWGGCSEDVEFGSMVSREFADARENRPDARSAMNRHNNEAGRTSIIELMHLKCKCHGLSGSCEVKTCWWSQPDFRVIGDYLKDKYDSASEMVVEKHRESRGWVETLRPKYNFFKAPTEKDLVYYENSPNFCEPNPETGSFGTRDRICNVTSHGIDGCDLLCCGRGHNTRTEKRKEKCHCIFHWCCYVRCQECIRVYDVHTCK.

Positions 1–18 (MASFGYFLFLCGLSQALS) are cleaved as a signal peptide. Cysteines 77 and 88 form a disulfide. 2 N-linked (GlcNAc...) asparagine glycosylation sites follow: asparagine 87 and asparagine 92. Disulfide bonds link cysteine 128–cysteine 136, cysteine 138–cysteine 155, cysteine 203–cysteine 217, cysteine 205–cysteine 212, cysteine 281–cysteine 312, cysteine 297–cysteine 307, cysteine 311–cysteine 351, cysteine 327–cysteine 342, cysteine 329–cysteine 339, and cysteine 334–cysteine 335. Residue serine 209 is the site of O-palmitoleoyl serine; by PORCN attachment. Residue asparagine 298 is glycosylated (N-linked (GlcNAc...) asparagine).

The protein belongs to the Wnt family. Palmitoleoylation is required for efficient binding to frizzled receptors. Depalmitoleoylation leads to inhibit the Wnt signaling pathway. Post-translationally, disulfide bonds have critical and distinct roles in secretion and activity. Loss of each conserved cysteine in WNT3A results in high molecular weight oxidized Wnt oligomers, which are formed through inter-Wnt disulfide bonding. As to expression, expressed in cornea. Isoform 1 is expressed in the primitive streak, dorsal neural tube, proximal otic vesicle, the apical ectodermal ridge and the epithelium of feather buds.

The protein resides in the secreted. The protein localises to the extracellular space. Its subcellular location is the extracellular matrix. It is found in the cytoplasm. Functionally, ligand for members of the frizzled family of seven transmembrane receptors. Functions in the canonical Wnt signaling pathway that results in activation of transcription factors of the TCF/LEF family. Regulates chick apical ectodermal ridge formation. Required for normal embryonic mesoderm development and formation of caudal somites. Required for normal morphogenesis of the developing neural tube. The polypeptide is Protein Wnt-3a (WNT3A) (Gallus gallus (Chicken)).